Here is a 74-residue protein sequence, read N- to C-terminus: Exodeoxyribonuclease 7 small subunit (74 aa).

It belongs to the XseB family. Heterooligomer composed of large and small subunits.

Its subcellular location is the cytoplasm. It carries out the reaction Exonucleolytic cleavage in either 5'- to 3'- or 3'- to 5'-direction to yield nucleoside 5'-phosphates.. In terms of biological role, bidirectionally degrades single-stranded DNA into large acid-insoluble oligonucleotides, which are then degraded further into small acid-soluble oligonucleotides. The chain is Exodeoxyribonuclease 7 small subunit from Actinobacillus pleuropneumoniae serotype 5b (strain L20).